A 943-amino-acid chain; its full sequence is Translation initiation factor IF-2 (943 aa).

The segment covering 99–113 (VKAAQTQAAPVQPEQ) has biased composition (low complexity). The disordered stretch occupies residues 99 to 354 (VKAAQTQAAP…LEPNQHAFQA (256 aa)). A compositionally biased stretch (basic and acidic residues) spans 117-141 (DAVKARAEAAARAEARAKAEAEAAK). Residues 145-172 (AKAGNKAKPAAQKPTEAKAETAPVAAET) show a composition bias toward low complexity. Over residues 173-197 (KPAEPKEKAVKPKHERNGKGKDAKK) the composition is skewed to basic and acidic residues. Low complexity predominate over residues 200–215 (KPAAPAVPQPVVSAEE). Basic and acidic residues predominate over residues 216 to 250 (QAQRDEEARRAAALRAHQEALLKEKQERQARREAM). Low complexity predominate over residues 251-264 (KQQAEQQAKAAQEA). Composition is skewed to basic and acidic residues over residues 295–308 (AKKE…DEGQ) and 319–335 (GGRD…ERVR). A tr-type G domain is found at 443 to 612 (PRPPVVTVMG…LLEAEVLELT (170 aa)). The segment at 452-459 (GHVDHGKT) is G1. 452 to 459 (GHVDHGKT) is a binding site for GTP. A G2 region spans residues 477-481 (GITQH). The tract at residues 498 to 501 (DTPG) is G3. Residues 498–502 (DTPGH) and 552–555 (NKID) contribute to the GTP site. The segment at 552–555 (NKID) is G4. The segment at 588–590 (SAK) is G5.

Belongs to the TRAFAC class translation factor GTPase superfamily. Classic translation factor GTPase family. IF-2 subfamily.

Its subcellular location is the cytoplasm. One of the essential components for the initiation of protein synthesis. Protects formylmethionyl-tRNA from spontaneous hydrolysis and promotes its binding to the 30S ribosomal subunits. Also involved in the hydrolysis of GTP during the formation of the 70S ribosomal complex. The sequence is that of Translation initiation factor IF-2 from Neisseria gonorrhoeae (strain NCCP11945).